The primary structure comprises 278 residues: Tryptophan synthase alpha chain (278 aa).

Active-site proton acceptor residues include Glu-61 and Asp-72.

This sequence belongs to the TrpA family. Tetramer of two alpha and two beta chains.

It carries out the reaction (1S,2R)-1-C-(indol-3-yl)glycerol 3-phosphate + L-serine = D-glyceraldehyde 3-phosphate + L-tryptophan + H2O. Its pathway is amino-acid biosynthesis; L-tryptophan biosynthesis; L-tryptophan from chorismate: step 5/5. Its function is as follows. The alpha subunit is responsible for the aldol cleavage of indoleglycerol phosphate to indole and glyceraldehyde 3-phosphate. This Shewanella oneidensis (strain ATCC 700550 / JCM 31522 / CIP 106686 / LMG 19005 / NCIMB 14063 / MR-1) protein is Tryptophan synthase alpha chain.